Consider the following 418-residue polypeptide: Glutamyl-tRNA reductase (418 aa).

Residues threonine 49–arginine 52, serine 109, glutamate 114–glutamine 116, and glutamine 120 contribute to the substrate site. Residue cysteine 50 is the Nucleophile of the active site. Glycine 189–isoleucine 194 is a binding site for NADP(+).

The protein belongs to the glutamyl-tRNA reductase family. In terms of assembly, homodimer.

It carries out the reaction (S)-4-amino-5-oxopentanoate + tRNA(Glu) + NADP(+) = L-glutamyl-tRNA(Glu) + NADPH + H(+). It functions in the pathway porphyrin-containing compound metabolism; protoporphyrin-IX biosynthesis; 5-aminolevulinate from L-glutamyl-tRNA(Glu): step 1/2. Its function is as follows. Catalyzes the NADPH-dependent reduction of glutamyl-tRNA(Glu) to glutamate 1-semialdehyde (GSA). This chain is Glutamyl-tRNA reductase, found in Shigella dysenteriae serotype 1 (strain Sd197).